The chain runs to 451 residues: Phenylalanine--tRNA ligase, mitochondrial (451 aa).

Substrate-binding positions include 157-160, arginine 179, 186-188, and 193-195; these read SAHQ, QHY, and QLE. An N6-acetyllysine modification is found at lysine 202. 2 residues coordinate substrate: glutamate 287 and phenylalanine 312. Residues 358-450 enclose the FDX-ACB domain; that stretch reads SKYPAVFNDI…AVQLLGVEGR (93 aa).

This sequence belongs to the class-II aminoacyl-tRNA synthetase family. Monomer.

It is found in the mitochondrion matrix. The protein resides in the mitochondrion. It carries out the reaction tRNA(Phe) + L-phenylalanine + ATP = L-phenylalanyl-tRNA(Phe) + AMP + diphosphate + H(+). Is responsible for the charging of tRNA(Phe) with phenylalanine in mitochondrial translation. To a lesser extent, also catalyzes direct attachment of m-Tyr (an oxidized version of Phe) to tRNA(Phe), thereby opening the way for delivery of the misacylated tRNA to the ribosome and incorporation of ROS-damaged amino acid into proteins. In Mus musculus (Mouse), this protein is Phenylalanine--tRNA ligase, mitochondrial (Fars2).